The primary structure comprises 34 residues: Photosystem II reaction center protein M (34 aa).

The chain crosses the membrane as a helical span at residues 7-27 (GFVASLLFVLVPTVFLIILFI).

This sequence belongs to the PsbM family. As to quaternary structure, PSII is composed of 1 copy each of membrane proteins PsbA, PsbB, PsbC, PsbD, PsbE, PsbF, PsbH, PsbI, PsbJ, PsbK, PsbL, PsbM, PsbT, PsbX, PsbY, PsbZ, Psb30/Ycf12, peripheral proteins PsbO, CyanoQ (PsbQ), PsbU, PsbV and a large number of cofactors. It forms dimeric complexes.

It is found in the cellular thylakoid membrane. Functionally, one of the components of the core complex of photosystem II (PSII). PSII is a light-driven water:plastoquinone oxidoreductase that uses light energy to abstract electrons from H(2)O, generating O(2) and a proton gradient subsequently used for ATP formation. It consists of a core antenna complex that captures photons, and an electron transfer chain that converts photonic excitation into a charge separation. This subunit is found at the monomer-monomer interface. The polypeptide is Photosystem II reaction center protein M (Synechococcus sp. (strain WH7803)).